We begin with the raw amino-acid sequence, 75 residues long: uncharacterized protein (75 aa).

4Fe-4S ferredoxin-type domains are found at residues 2–30 and 37–68; these read SHTI…KGEG and DWYW…KEEP. 2 residues coordinate [3Fe-4S] cluster: Cys-10 and Cys-16. [4Fe-4S] cluster contacts are provided by Cys-20, Cys-46, Cys-49, and Cys-52. [3Fe-4S] cluster is bound at residue Cys-56.

Requires [4Fe-4S] cluster as cofactor. [3Fe-4S] cluster is required as a cofactor.

It localises to the plastid. Its subcellular location is the chloroplast. This is an uncharacterized protein from Porphyra purpurea (Red seaweed).